The following is a 217-amino-acid chain: Cytidylate kinase (217 aa).

Residue glycine 9–threonine 17 participates in ATP binding.

The protein belongs to the cytidylate kinase family. Type 1 subfamily.

It is found in the cytoplasm. It catalyses the reaction CMP + ATP = CDP + ADP. The enzyme catalyses dCMP + ATP = dCDP + ADP. This is Cytidylate kinase from Thermosipho melanesiensis (strain DSM 12029 / CIP 104789 / BI429).